Here is a 119-residue protein sequence, read N- to C-terminus: Phenol 2-monooxygenase, oxygenase component DmpO (119 aa).

The multicomponent enzyme phenol hydroxylase is formed by DmpL (P1 component), DmpM (P2 component), DmpN (P3 component), DmpO (P4 component) and DmpP (P5 component). The oxygenase component is a dimer composed of three subunits, DmpL, DmpN and DmpO (DmpLNO).

It carries out the reaction phenol + NADH + O2 + H(+) = catechol + NAD(+) + H2O. Its pathway is aromatic compound metabolism; phenol degradation. Requires DmpM for efficient turnover. The activity of DmpLNO oxygenase is inhibited by dithiothreitol (DTT) by a mechanism apparently involving H(2)O(2) generation. Part of a multicomponent enzyme which catalyzes the degradation of phenol and some of its methylated derivatives. DmpL, DmpN and DmpO form the oxygenase component of the complex. Required for growth on phenol and for in vitro phenol hydroxylase activity. The polypeptide is Phenol 2-monooxygenase, oxygenase component DmpO (Pseudomonas sp. (strain CF600)).